The primary structure comprises 168 residues: Endoribonuclease YbeY (168 aa).

Residues histidine 126, histidine 130, and histidine 136 each contribute to the Zn(2+) site.

Belongs to the endoribonuclease YbeY family. Zn(2+) serves as cofactor.

Its subcellular location is the cytoplasm. Single strand-specific metallo-endoribonuclease involved in late-stage 70S ribosome quality control and in maturation of the 3' terminus of the 16S rRNA. This Sinorhizobium medicae (strain WSM419) (Ensifer medicae) protein is Endoribonuclease YbeY.